The following is an 813-amino-acid chain: Valine--tRNA ligase (813 aa).

A 'HIGH' region motif is present at residues 46-56; the sequence is PTVSGQLHIGH. The short motif at 536–540 is the 'KMSKS' region element; that stretch reads KMSKS. Residue lysine 539 participates in ATP binding.

Belongs to the class-I aminoacyl-tRNA synthetase family. ValS type 2 subfamily. Monomer.

It is found in the cytoplasm. The enzyme catalyses tRNA(Val) + L-valine + ATP = L-valyl-tRNA(Val) + AMP + diphosphate. Catalyzes the attachment of valine to tRNA(Val). As ValRS can inadvertently accommodate and process structurally similar amino acids such as threonine, to avoid such errors, it has a 'posttransfer' editing activity that hydrolyzes mischarged Thr-tRNA(Val) in a tRNA-dependent manner. The polypeptide is Valine--tRNA ligase (Rickettsia canadensis (strain McKiel)).